Reading from the N-terminus, the 156-residue chain is SsrA-binding protein (156 aa).

Residues 127 to 156 are disordered; that stretch reads GKKKYDKREDLKKKDAKRDVDRAMRDRQKY. Basic and acidic residues predominate over residues 132-156; that stretch reads DKREDLKKKDAKRDVDRAMRDRQKY.

It belongs to the SmpB family.

The protein resides in the cytoplasm. Required for rescue of stalled ribosomes mediated by trans-translation. Binds to transfer-messenger RNA (tmRNA), required for stable association of tmRNA with ribosomes. tmRNA and SmpB together mimic tRNA shape, replacing the anticodon stem-loop with SmpB. tmRNA is encoded by the ssrA gene; the 2 termini fold to resemble tRNA(Ala) and it encodes a 'tag peptide', a short internal open reading frame. During trans-translation Ala-aminoacylated tmRNA acts like a tRNA, entering the A-site of stalled ribosomes, displacing the stalled mRNA. The ribosome then switches to translate the ORF on the tmRNA; the nascent peptide is terminated with the 'tag peptide' encoded by the tmRNA and targeted for degradation. The ribosome is freed to recommence translation, which seems to be the essential function of trans-translation. The chain is SsrA-binding protein from Exiguobacterium sp. (strain ATCC BAA-1283 / AT1b).